The chain runs to 29 residues: YCQKWMWTCDSKRKCCEDMVCQLWCKKRL.

Cystine bridges form between C2/C16, C9/C21, and C15/C25.

Belongs to the neurotoxin 30 (phrixotoxin) family. As to expression, expressed by the venom gland.

The protein resides in the secreted. Inhibits voltage-gated sodium channels Nav1.1/SCN1A (IC(50)=630 nM), Nav1.2/SCN2A (IC(50)=230 nM), Nav1.3/SCN3A (IC(50)=770 nM), Nav1.4/SCN4A (IC(50)=1290 nM), Nav1.6/SCN8A (IC(50)=630 nM), Nav1.7/SCN9A (IC(50)=15.3-1000 nM) and potassium channels Kv11.1/KCNH2 (IC(50)=4.2 uM). The sequence is that of Beta-theraphotoxin-Gr1a from Grammostola rosea (Chilean rose tarantula).